A 443-amino-acid chain; its full sequence is Putative transporter AmpG 1 (443 aa).

13 helical membrane passes run 5–25, 42–62, 78–98, 104–124, 143–163, 171–191, 230–250, 254–274, 299–319, 324–344, 354–374, 393–413, and 415–435; these read SHIYIIWLFGFISGFNVMITG, IGMLSFITLPYSINFLLAPVF, LSWICLTSTTLISLIFILSFL, LVLLSFIAFIISFFSAAQDTI, GIYILGYRVGMLLASSGAIYL, AIYKIFAGVIFVYLILLILVA, FNYFKNFISAYLLKIFSGFYF, DINLAYYIILILIFLVLYRLP, VCKFCGVMGAIIGGLIGGIIM, ILYSILLFGIIHALSHIFFIL, ILFITIGVESITGGMTMTAYI, LSSMMGISRSIFPIISGYMVV, and FGWQNFFLFTTIITIPSLLIL.

Belongs to the major facilitator superfamily.

It localises to the cell inner membrane. The chain is Putative transporter AmpG 1 (ampG1) from Rickettsia prowazekii (strain Madrid E).